The following is a 1755-amino-acid chain: MESQQLSQHSPISHGSACASVTSKEVQTTQDPLDISASKTEECEKVSTQANSQQPTTPLSSAVPENHHHASPQAAQVPLPQNGPYPQQRMMNTQQANISGWPVYGHPSLMPYPPYQMSPMYAPPGAQSQFTQYPQYVGTHLNTPSPESGNSFPDSSSAKSNMTSTNQHVRPPPILTSPNDFLNWVKIYIKFLQNSNLGDIIPTATRKAVRQMTDDELTFLCHTFQLFAPSQFLPPWVKDILSVDYTDIMKILSKSINKMQSDTQEVNDITTLATLHYNGSTPADAFEAEVTNILDRLNNNGIPINNKVACQFIMRGLSGEYKFLRYARHRCIHMTVADLFSDIHSMYEEQQESKRNKSTHRRSPSDEKKDSRTYTNTTKPKSITRNSQKPNNSQSRTARAHNVSTFNNSPGPDNDLIRGSTTEPIQLKNTHDLHLGQELTESTVNHTNHSDDKLPGHLLLDSGASRTLIRSAHHIHSASSNPDINVVDAQKRNIPINAIGDLQFHFQDNTKTSIKVLHTPNIAYDLLSLNELAAVDITACFTKNVLERSDGTVLAPIVKYGDFYWVSKKYLLPSNISVPTINNVHTSESTRKYPYPFIHRMLAHANAQTIRYSLKNNTITYFNESDVDWSSAIDYQCPDCLIGKSTKHRHIKGSRLKYQNSYEPFQYLHTDIFGPVHNLPKSAPSYFISFTDETTKFRWVYPLHDRREDSILDVFTTILAFIKNQFQASVLVIQMDRGSEYTNRTLHKFLEKNGITPCYTTTADSRAHGVAERLNRTLLDDCRTQLQCSGLPNHLWFSAIEFSTIVRNSLASPKSKKSARQHAGLAGLDISTLLPFGQPVIVNDHNPNSKIHPRGIPGYALHPSRNSYGYIIYLPSLKKTVDTTNYVILQGKESRLDQFNYDALTFDEDLNRLTASYHSFIASNEIQQSNDLNIESDHDFQSDIELHPEQLRNVLSKAVSPTDSTPPSTHTEDSKRVSKTNIRAPREVDPNISESNILPSKKRSSTPQISDIESTGSGGMHRLDVPLLAPMSQSNTHESSHASKSKDFRHSDSYSDNETNHTNVPISSTGGTNNKTVPQTSEQETEKRIIHRSPSIDTSSSESNSLHHVVPIKTSDTCPKENTEESIIADLPLPDLPPEPPTELSDSFKELPPINSRQTNSSLGGIGDSNAYTTINSKKRSLEDNETEIKVSRDTWNTKNMRSLEPPRSKKRIHLIAAVKAVKSIKPIRTTLRYDEAITYNKDIKEKEKYIEAYHKEVNQLLKMKTWDTDKYYDRKEIDPKRVINSMFIFNRKRDGTHKARFVARGDIQHPDTYDSGMQSNTVHHYALMTSLSLALDNNYYITQLDISSAYLYADIKEELYIRPPPHLGMNDKLIRLKKSLYGLKQSGANWYETIKSYLIKQCGMEEVRGWSCVFENSQVTICLFVDDMVLFSKNLNSNKRIIDKLKMQYDTKIINLGESDEEIQYDILGLEIKYQRGKYMKLGMENSLTEKIPKLNVPLNPKGRKLSAPGQPGLYIDQQELELEEDDYKMKVHEMQKLIGLASYVGYKFRFDLLYYINTLAQHILFPSKQVLDMTYELIQFIWNTRDKQLIWHKSKPVKPTNKLVVISDASYGNQPYYKSQIGNIYLLNGKVIGGKSTKASLTCTSTTEAEIHAISESVPLLNNLSYLIQELDKKPITKGLLTDSKSTISIIISNNEEKFRNRFFGTKAMRLRDEVSGNHLHVCYIETKKNIADVMTKPLPIKTFKLLTNKWIH.

3 stretches are compositionally biased toward polar residues: residues methionine 1 to aspartate 31, valine 46 to serine 60, and valine 137 to histidine 168. Disordered stretches follow at residues methionine 1 to glutamine 88, valine 137 to isoleucine 174, and glutamine 350 to serine 420. Residues asparagine 299–histidine 401 form an RNA-binding region. The segment covering serine 363–arginine 372 has biased composition (basic and acidic residues). The segment covering threonine 373–glycine 411 has biased composition (polar residues). Aspartate 461 serves as the catalytic For protease activity; shared with dimeric partner. Residues asparagine 583–cysteine 640 form an integrase-type zinc finger-like region. One can recognise an Integrase catalytic domain in the interval asparagine 660 to proline 835. Positions 671 and 736 each coordinate Mg(2+). The interval alanine 958–tyrosine 1172 is disordered. Over residues serine 960 to threonine 969 the composition is skewed to low complexity. Over residues serine 1005 to threonine 1015 the composition is skewed to polar residues. The segment covering glutamate 1038 to serine 1053 has biased composition (basic and acidic residues). Composition is skewed to polar residues over residues tyrosine 1054–glutamate 1082 and serine 1095–leucine 1106. Positions lysine 1178–arginine 1212 match the Bipartite nuclear localization signal motif. Residues asparagine 1338–glutamine 1476 form the Reverse transcriptase Ty1/copia-type domain. Mg(2+) is bound by residues aspartate 1346, aspartate 1427, aspartate 1428, aspartate 1610, glutamate 1652, and aspartate 1685. Positions aspartate 1610–lysine 1752 constitute an RNase H Ty1/copia-type domain.

As to quaternary structure, the capsid protein forms a homotrimer, from which the VLPs are assembled. The protease is a homodimer, whose active site consists of two apposed aspartic acid residues. Post-translationally, initially, virus-like particles (VLPs) are composed of the structural unprocessed proteins Gag and Gag-Pol, and also contain the host initiator methionine tRNA (tRNA(i)-Met) which serves as a primer for minus-strand DNA synthesis, and a dimer of genomic Ty RNA. Processing of the polyproteins occurs within the particle and proceeds by an ordered pathway, called maturation. First, the protease (PR) is released by autocatalytic cleavage of the Gag-Pol polyprotein yielding capsid protein p45 and a Pol-p154 precursor protein. This cleavage is a prerequisite for subsequent processing of Pol-p154 at the remaining sites to release the mature structural and catalytic proteins. Maturation takes place prior to the RT reaction and is required to produce transposition-competent VLPs.

It is found in the cytoplasm. The protein resides in the nucleus. The catalysed reaction is DNA(n) + a 2'-deoxyribonucleoside 5'-triphosphate = DNA(n+1) + diphosphate. It carries out the reaction Endonucleolytic cleavage to 5'-phosphomonoester.. In terms of biological role, capsid protein (CA) is the structural component of the virus-like particle (VLP), forming the shell that encapsulates the retrotransposons dimeric RNA genome. The particles are assembled from trimer-clustered units and there are holes in the capsid shells that allow for the diffusion of macromolecules. CA also has nucleocapsid-like chaperone activity, promoting primer tRNA(i)-Met annealing to the multipartite primer-binding site (PBS), dimerization of Ty1 RNA and initiation of reverse transcription. The aspartyl protease (PR) mediates the proteolytic cleavages of the Gag and Gag-Pol polyproteins after assembly of the VLP. Its function is as follows. Reverse transcriptase/ribonuclease H (RT) is a multifunctional enzyme that catalyzes the conversion of the retro-elements RNA genome into dsDNA within the VLP. The enzyme displays a DNA polymerase activity that can copy either DNA or RNA templates, and a ribonuclease H (RNase H) activity that cleaves the RNA strand of RNA-DNA heteroduplexes during plus-strand synthesis and hydrolyzes RNA primers. The conversion leads to a linear dsDNA copy of the retrotransposon that includes long terminal repeats (LTRs) at both ends. Functionally, integrase (IN) targets the VLP to the nucleus, where a subparticle preintegration complex (PIC) containing at least integrase and the newly synthesized dsDNA copy of the retrotransposon must transit the nuclear membrane. Once in the nucleus, integrase performs the integration of the dsDNA into the host genome. The polypeptide is Transposon Ty1-MR1 Gag-Pol polyprotein (TY1B-MR1) (Saccharomyces cerevisiae (strain ATCC 204508 / S288c) (Baker's yeast)).